Consider the following 122-residue polypeptide: MIQPQSYLNVADNSGARKIMCIRILGGSNKKYGHIGDTIIGVVKEAIPNMTLKKSEVVRAVIVRTCKELKRKNGTILRFDENAAVIINQEGNPRGTRIFGPVARELREANFTKIVSLAPEVL.

Belongs to the universal ribosomal protein uL14 family. Part of the 50S ribosomal subunit.

Its subcellular location is the plastid. It is found in the chloroplast. Its function is as follows. Binds to 23S rRNA. The polypeptide is Large ribosomal subunit protein uL14c (Chaetosphaeridium globosum (Charophycean green alga)).